The chain runs to 427 residues: MTTIVRIFGREILDSRGNPTVEADVYLADGSMGRAAVPSGASTGEHEAVELRDGDKGRYLGKGCLNAAKHINGEIATALHGKDATQQGEIDGAMIALDGTPNKGRLGANAILAVSMATARAAAAAQRTPLYRYLGGVGANTLPVPMMNIINGGAHADNSVDLQEFMVAPFGAKSFSEALRMGVEVFHTLKKVLSKKGYSTAVGDEGGFAPMLKSNEEAIESCLEAITQAGFKPGENVGICLDPASSEFFKGGKYVFKKSDKSERTSEQMVEFWANWVRQYPAILSIEDGMAEDDWAGWKLLTDTVGSKIQLVGDDLFVTNSTRLKQGIEGGVANSILVKVNQIGTLTETLEAMQMAANAGYTAVVSHRSGETEDPFIADLAVATNAGQIKTGSASRTDRICKYNQLLRIEERLGSSAVFPGRKAYSR.

Gln163 contacts (2R)-2-phosphoglycerate. Glu205 serves as the catalytic Proton donor. Mg(2+)-binding residues include Asp242, Glu287, and Asp314. 4 residues coordinate (2R)-2-phosphoglycerate: Lys339, Arg368, Ser369, and Lys390. The active-site Proton acceptor is Lys339.

The protein belongs to the enolase family. Mg(2+) is required as a cofactor.

Its subcellular location is the cytoplasm. It localises to the secreted. The protein localises to the cell surface. The enzyme catalyses (2R)-2-phosphoglycerate = phosphoenolpyruvate + H2O. The protein operates within carbohydrate degradation; glycolysis; pyruvate from D-glyceraldehyde 3-phosphate: step 4/5. In terms of biological role, catalyzes the reversible conversion of 2-phosphoglycerate (2-PG) into phosphoenolpyruvate (PEP). It is essential for the degradation of carbohydrates via glycolysis. This chain is Enolase, found in Solibacter usitatus (strain Ellin6076).